The sequence spans 72 residues: Protein kish-A (72 aa).

The first 26 residues, 1 to 26 (MSAIFNFQSLLTVILLLICTCAYIRS), serve as a signal peptide directing secretion. Over 27–53 (LAPSLLDRNKTGLLGIFWKCARIGERK) the chain is Extracellular. Asn35 carries N-linked (GlcNAc...) asparagine glycosylation. The chain crosses the membrane as a helical span at residues 54–71 (SPYVAVCCIVMAFSILFI). Gln72 is a topological domain (cytoplasmic).

This sequence belongs to the KISH family.

It localises to the golgi apparatus membrane. Functionally, involved in the early part of the secretory pathway. The sequence is that of Protein kish-A (TMEM167A) from Bos taurus (Bovine).